Here is a 275-residue protein sequence, read N- to C-terminus: Lectin (275 aa).

Residues 1–30 (MASLQTQMISFYLIFLSILLTTIFFFKVNS) form the signal peptide. Positions 111 and 129 each coordinate D-glucose. Residues E149 and D151 each coordinate Mn(2+). Ca(2+) contacts are provided by D151, F153, N155, and D159. 2 residues coordinate Mn(2+): D159 and H166. Residues 211-217 (NSLEEEN) constitute a propeptide that is removed on maturation. D-glucose is bound by residues G246 and A247. Residues 270–275 (KQAADA) constitute a propeptide that is removed on maturation.

The protein belongs to the leguminous lectin family. As to quaternary structure, heterotetramer of two alpha and two beta chains. Post-translationally, the mature form consists of two chains, alpha and beta, produced by cleavage of the immature protein. These remain cleaved, yet fold together to form one subunit.

In terms of biological role, D-mannose specific lectin. In Lens culinaris subsp. culinaris (Cultivated lentil), this protein is Lectin.